We begin with the raw amino-acid sequence, 1958 residues long: Rho GTPase-activating protein 21 (1958 aa).

The interval 1 to 42 (MMATRRTGLSEGDGDKLKACEVSKNKDGKEQSETVSLSEDET) is disordered. Basic and acidic residues predominate over residues 13 to 32 (DGDKLKACEVSKNKDGKEQS). Serine 36 and serine 57 each carry phosphoserine. One can recognise a PDZ domain in the interval 50-159 (TVTLKRTSQG…TLELSVMPKD (110 aa)). Polar residues-rich tracts occupy residues 286–295 (SNRNNHTGPS), 306–325 (SEQTSLKTVSRTTSPPLSIP), and 418–436 (ASQSTTDYNQVVPNRTTLQ). Disordered regions lie at residues 286–325 (SNRNNHTGPSHRTEEVRYGVSEQTSLKTVSRTTSPPLSIP) and 418–458 (ASQS…QRSV). The span at 448-458 (PQSVQIRQRSV) shows a compositional bias: low complexity. Phosphoserine is present on serine 459. Arginine 554 and arginine 575 each carry omega-N-methylarginine. 3 positions are modified to phosphoserine: serine 612, serine 616, and serine 625. The span at 659–687 (SLLNQQTWVRTDSAPDQQVETGKSPSLSG) shows a compositional bias: polar residues. Positions 659–751 (SLLNQQTWVR…PSGRQTPQPL (93 aa)) are disordered. Serine 717 is modified (phosphoserine). Residues 729-742 (LDNKEAVILREKPP) show a composition bias toward basic and acidic residues. A Phosphothreonine modification is found at threonine 747. A phosphoserine mark is found at serine 857, serine 862, and serine 881. A disordered region spans residues 859-885 (DHESVGPPSLDAQPNSKTERSKSYDEG). Residues 875 to 885 (KTERSKSYDEG) are compositionally biased toward basic and acidic residues. Position 882 is a phosphotyrosine (tyrosine 882). A phosphoserine mark is found at serine 924, serine 926, serine 954, serine 1099, and serine 1115. Residues 930 to 1097 (SDAAKEGWLH…AKSEPKTQSP (168 aa)) are interaction with ARF1 and ARF6. Positions 931–1040 (DAAKEGWLHF…WIKTIQESSN (110 aa)) constitute a PH domain. Positions 1086–1133 (LGAKSEPKTQSPHSPKEESERKLLSKDDTSPPKDKGTWRKGIPSIMRK) are disordered. The span at 1099 to 1122 (SPKEESERKLLSKDDTSPPKDKGT) shows a compositional bias: basic and acidic residues. One can recognise a Rho-GAP domain in the interval 1147–1339 (VRLDDCPPAH…TLIQHHDWFF (193 aa)). Disordered stretches follow at residues 1348-1401 (LTTV…GSGK), 1418-1575 (SRKR…KHSE), 1598-1642 (SLDS…SEFP), and 1655-1686 (RGKLQEVTKSSRRNSEGSELSCTEGSLTSSLD). Residues 1349 to 1362 (TTVQEESTVDSQPV) are compositionally biased toward polar residues. Low complexity predominate over residues 1383 to 1401 (SDSATSDSTKSKGSWGSGK). 3 positions are modified to phosphoserine: serine 1418, serine 1432, and serine 1433. 2 stretches are compositionally biased toward basic and acidic residues: residues 1441-1466 (FFKKENVEQCHNDTKEESKKESETLG) and 1477-1493 (NSTRKDPSTTKDEKISL). Lysine 1444 participates in a covalent cross-link: Glycyl lysine isopeptide (Lys-Gly) (interchain with G-Cter in SUMO). A Phosphoserine modification is found at serine 1504. Phosphothreonine is present on threonine 1516. A Phosphoserine modification is found at serine 1527. The segment covering 1544–1559 (SDSGTLLSTSSQASLA) has biased composition (low complexity). Residues 1592–1861 (SATYLTSLDS…WLARERLRTS (270 aa)) are interaction with CTNNA1. The segment covering 1603 to 1612 (RLSPEVQSVA) has biased composition (polar residues). The segment covering 1624-1634 (SELISEGRPVE) has biased composition (basic and acidic residues). At serine 1669 the chain carries Phosphoserine. Residues 1671 to 1686 (GSELSCTEGSLTSSLD) are compositionally biased toward polar residues. Position 1682 is a phosphothreonine (threonine 1682). A Phosphoserine modification is found at serine 1742. Positions 1860 to 1958 (TSTSDLSRGE…GSKAEFHPCL (99 aa)) are disordered. The segment covering 1874-1909 (QTENPSTREIATTDTPLSLHCNTGSSSSTLASTNRP) has biased composition (polar residues). A Phosphoserine modification is found at serine 1917. Positions 1918–1931 (PDQINGESFQNVSK) are enriched in polar residues.

Interacts with GTP-bound ARF1 and ARF6. Interacts with CTNNA1. Post-translationally, sumoylated with SUMO2 and SUMO3 in proliferating lymphocytes. In terms of tissue distribution, widely expressed with higher expression in brain, heart, skeletal muscle and placenta.

The protein resides in the golgi apparatus membrane. It localises to the cell junction. The protein localises to the cytoplasmic vesicle membrane. It is found in the cytoplasm. Its subcellular location is the cytoskeleton. Its function is as follows. Functions as a GTPase-activating protein (GAP) for RHOA and CDC42. Downstream partner of ARF1 which may control Golgi apparatus structure and function. Also required for CTNNA1 recruitment to adherens junctions. This chain is Rho GTPase-activating protein 21 (ARHGAP21), found in Homo sapiens (Human).